The following is a 1163-amino-acid chain: Guanylate cyclase 32E (1163 aa).

The N-terminal stretch at 1-25 (MPGPCASAAAFSCILVLLLLGCQRS) is a signal peptide. Over 29 to 469 (AAGATVSSMR…LCPRKKLDWR (441 aa)) the chain is Extracellular. N-linked (GlcNAc...) asparagine glycans are attached at residues asparagine 147, asparagine 206, asparagine 368, and asparagine 390. A helical membrane pass occupies residues 470–490 (YLVSGPLCALVVVVAIALLIK). Residues 491-1163 (HYRYEQTLAG…RSAPSITFRL (673 aa)) lie on the Cytoplasmic side of the membrane. The region spanning 507 to 800 (MKDVTVINLG…IRLVRMHLKE (294 aa)) is the Protein kinase domain. Residues 873 to 1003 (TILFSDIVGF…DTVNTASRME (131 aa)) form the Guanylate cyclase domain.

The protein belongs to the adenylyl cyclase class-4/guanylyl cyclase family.

It localises to the membrane. The enzyme catalyses GTP = 3',5'-cyclic GMP + diphosphate. The sequence is that of Guanylate cyclase 32E (Gyc32E) from Drosophila melanogaster (Fruit fly).